The following is a 431-amino-acid chain: Glutamate--tRNA ligase 1 (431 aa).

The short motif at 6–16 is the 'HIGH' region element; sequence PSPTGDMHIGN. The 'KMSKS' region motif lies at 235–239; sequence KMSKR. Lys-238 serves as a coordination point for ATP.

It belongs to the class-I aminoacyl-tRNA synthetase family. Glutamate--tRNA ligase type 1 subfamily. As to quaternary structure, monomer.

It is found in the cytoplasm. It carries out the reaction tRNA(Glu) + L-glutamate + ATP = L-glutamyl-tRNA(Glu) + AMP + diphosphate. Functionally, catalyzes the attachment of glutamate to tRNA(Glu) in a two-step reaction: glutamate is first activated by ATP to form Glu-AMP and then transferred to the acceptor end of tRNA(Glu). This Campylobacter jejuni subsp. jejuni serotype O:6 (strain 81116 / NCTC 11828) protein is Glutamate--tRNA ligase 1.